The chain runs to 705 residues: Kinesin-like protein KIF2A (705 aa).

Residues 1–216 (MATANFGKIQ…LDYRPLTTAD (216 aa)) form a globular region. Residues 65–186 (DLVPDEDIEP…QELREKRAQD (122 aa)) are disordered. S75 carries the phosphoserine modification. Residue T96 is modified to Phosphothreonine. At K101 the chain carries N6-acetyllysine. Residues 122–139 (LPEQSSSAQQNGSVSDIS) are compositionally biased toward polar residues. Phosphoserine is present on residues S134 and S139. The span at 158 to 186 (CVKEVEKLQEKREKRRLQQQELREKRAQD) shows a compositional bias: basic and acidic residues. The region spanning 222-552 (RICVCVRKRP…LRYANRVKEL (331 aa)) is the Kinesin motor domain. Residue 312 to 319 (GQTGSGKT) participates in ATP binding. 2 positions are modified to phosphoserine: T528 and Y545. The stretch at 659–698 (ATQLEAILEQKIDILTELRDKVKSFRAALQEEEQASKQIN) forms a coiled coil.

This sequence belongs to the TRAFAC class myosin-kinesin ATPase superfamily. Kinesin family. MCAK/KIF2 subfamily. As to quaternary structure, interacts with AURKA and PLK1. Interacts with PSRC1. Interacts with MCRS1; the interaction enhances recruitment of KIF2A to the minus ends of spindle microtubules which promotes chromosome alignment. In terms of tissue distribution, highest level in lung. High level in ovary, moderate levels in heart, kidney, placenta, skeletal muscle and spleen (at protein level). Pancreas and spleen express a shorter isoform (at protein level). Expressed in the flagellum of elongated spermatids and sperm in the testis lumen (at protein level). Isoform 1 expressed in neuronal cells. Isoform 2 expressed in astrocytes and fibroblasts.

It is found in the cytoplasm. The protein resides in the cytoskeleton. It localises to the microtubule organizing center. Its subcellular location is the centrosome. The protein localises to the spindle pole. It is found in the spindle. The protein resides in the lysosome. Functionally, plus end-directed microtubule-dependent motor required for normal brain development. May regulate microtubule dynamics during axonal growth. Required for normal progression through mitosis. Required for normal congress of chromosomes at the metaphase plate. Required for normal spindle dynamics during mitosis. Promotes spindle turnover. Implicated in formation of bipolar mitotic spindles. Has microtubule depolymerization activity. The polypeptide is Kinesin-like protein KIF2A (Kif2a) (Mus musculus (Mouse)).